The following is a 445-amino-acid chain: Phosphoglucosamine mutase (445 aa).

Catalysis depends on S102, which acts as the Phosphoserine intermediate. Residues S102, D241, D243, and D245 each contribute to the Mg(2+) site. Position 102 is a phosphoserine (S102).

Belongs to the phosphohexose mutase family. The cofactor is Mg(2+). Activated by phosphorylation.

The catalysed reaction is alpha-D-glucosamine 1-phosphate = D-glucosamine 6-phosphate. Its function is as follows. Catalyzes the conversion of glucosamine-6-phosphate to glucosamine-1-phosphate. The polypeptide is Phosphoglucosamine mutase (Acinetobacter baumannii (strain AB0057)).